A 109-amino-acid polypeptide reads, in one-letter code: Cell division protein ZapA (109 aa).

A coiled-coil region spans residues 21 to 99; the sequence is PEQQEALNQA…IEQALLEQGK (79 aa).

This sequence belongs to the ZapA family. Type 1 subfamily. As to quaternary structure, homodimer. Interacts with FtsZ.

Its subcellular location is the cytoplasm. Functionally, activator of cell division through the inhibition of FtsZ GTPase activity, therefore promoting FtsZ assembly into bundles of protofilaments necessary for the formation of the division Z ring. It is recruited early at mid-cell but it is not essential for cell division. The chain is Cell division protein ZapA from Pectobacterium atrosepticum (strain SCRI 1043 / ATCC BAA-672) (Erwinia carotovora subsp. atroseptica).